Reading from the N-terminus, the 443-residue chain is UDP-N-acetylmuramate--L-alanine ligase (443 aa).

Residue 110–116 (GAHGKTS) participates in ATP binding.

The protein belongs to the MurCDEF family.

The protein localises to the cytoplasm. The enzyme catalyses UDP-N-acetyl-alpha-D-muramate + L-alanine + ATP = UDP-N-acetyl-alpha-D-muramoyl-L-alanine + ADP + phosphate + H(+). Its pathway is cell wall biogenesis; peptidoglycan biosynthesis. Cell wall formation. In Streptococcus equi subsp. equi (strain 4047), this protein is UDP-N-acetylmuramate--L-alanine ligase.